We begin with the raw amino-acid sequence, 383 residues long: Protein RecA (383 aa).

ATP is bound at residue 79–86 (GPESSGKT). Positions 347 to 369 (IEEDNTEEKQSSKEKETDEKADK) are disordered. Residues 353-369 (EEKQSSKEKETDEKADK) are compositionally biased toward basic and acidic residues.

Belongs to the RecA family.

The protein localises to the cytoplasm. Can catalyze the hydrolysis of ATP in the presence of single-stranded DNA, the ATP-dependent uptake of single-stranded DNA by duplex DNA, and the ATP-dependent hybridization of homologous single-stranded DNAs. It interacts with LexA causing its activation and leading to its autocatalytic cleavage. The chain is Protein RecA from Streptococcus mutans serotype c (strain ATCC 700610 / UA159).